Here is a 676-residue protein sequence, read N- to C-terminus: Probable metal-nicotianamine transporter YSL6 (676 aa).

Helical transmembrane passes span Ile38–His58, Leu62–Val82, Cys110–Met130, Gly154–Val174, Ile276–Val296, Val321–Ala341, Phe392–Phe412, Pro413–Cys433, Ile452–Ala472, Val510–Phe530, Leu561–Leu581, Phe604–Trp624, and Val639–Ile659.

This sequence belongs to the YSL (TC 2.A.67.2) family.

It is found in the membrane. In terms of biological role, may be involved in the transport of nicotianamine-chelated metals. This Arabidopsis thaliana (Mouse-ear cress) protein is Probable metal-nicotianamine transporter YSL6 (YSL6).